The sequence spans 250 residues: 26 kDa periplasmic immunogenic protein (250 aa).

A signal peptide spans 1 to 28 (MNTRASNFLAASFSTIMLVGAFSLPAFA).

It localises to the periplasm. In Brucella melitensis biotype 1 (strain ATCC 23456 / CCUG 17765 / NCTC 10094 / 16M), this protein is 26 kDa periplasmic immunogenic protein (bp26).